The chain runs to 278 residues: Large ribosomal subunit protein uL2 (278 aa).

The tract at residues 201 to 278 is disordered; it reads HGNINDGKAG…IMRSRHQRKK (78 aa). Basic residues predominate over residues 210–221; sequence GRSRWRGKKPHV.

This sequence belongs to the universal ribosomal protein uL2 family. As to quaternary structure, part of the 50S ribosomal subunit. Forms a bridge to the 30S subunit in the 70S ribosome.

Functionally, one of the primary rRNA binding proteins. Required for association of the 30S and 50S subunits to form the 70S ribosome, for tRNA binding and peptide bond formation. It has been suggested to have peptidyltransferase activity; this is somewhat controversial. Makes several contacts with the 16S rRNA in the 70S ribosome. This is Large ribosomal subunit protein uL2 from Rhizobium rhizogenes (strain K84 / ATCC BAA-868) (Agrobacterium radiobacter).